A 111-amino-acid chain; its full sequence is Nascent polypeptide-associated complex protein (111 aa).

Positions 3-72 constitute an NAC-A/B domain; that stretch reads GMNPRQMKKL…EEVREVLEIS (70 aa).

This sequence belongs to the NAC-alpha family. In terms of assembly, homodimer. Interacts with the ribosome. Binds ribosomal RNA.

Its function is as follows. Contacts the emerging nascent chain on the ribosome. In Thermococcus kodakarensis (strain ATCC BAA-918 / JCM 12380 / KOD1) (Pyrococcus kodakaraensis (strain KOD1)), this protein is Nascent polypeptide-associated complex protein.